The primary structure comprises 263 residues: Putative alpha/beta hydrolase L404 (263 aa).

A lipid anchor (N-myristoyl glycine; by host) is attached at Gly-2.

Belongs to the AB hydrolase superfamily.

The chain is Putative alpha/beta hydrolase L404 from Acanthamoeba polyphaga (Amoeba).